Reading from the N-terminus, the 816-residue chain is H(+)/Cl(-) exchange transporter 5 (816 aa).

The segment at 1–28 (MAMWQGAMDNRGFQQGSFNSFQSSSSDE) is disordered. Over 1–124 (MAMWQGAMDN…WALIHSVSDA (124 aa)) the chain is Cytoplasmic. A compositionally biased stretch (low complexity) spans 12 to 25 (GFQQGSFNSFQSSS). Helical transmembrane passes span 125–162 (FSGWLLMLLIGLLSGSLAGLIDISAHWMTDLKEGICTE) and 208–231 (VNYFMYVLWALLFAFLAVSLVKVF). The Selectivity filter part_1 signature appears at 237–241 (GSGIP). Ser-238 contacts chloride. Positions 240–247 (IPEIKTIL) form an intramembrane region, helical. 2 consecutive transmembrane segments (helical) span residues 256–275 (LGKWTLIIKTITLVLAVSSG) and 281–300 (EGPLVHVACCCGNILCHCFN). A Selectivity filter part_2 motif is present at residues 279 to 283 (GKEGP). 2 consecutive intramembrane regions (helical) follow at residues 312–324 (VLSAAAAAGVSVA) and 328–336 (PIGGVLFSL). The next 5 helical transmembrane spans lie at 348–366 (LWRSFFAALVAAFTLRSIN), 389–414 (LVPFILLGIFGGLWGALFIRTNIAWC), 422–442 (LGKYPVIEVLVVTAITAILAF), 498–518 (MWQLALTLILKIVITIFTFGM), and 523–542 (GLFIPSMAVGAIAGRLLGVG). The Selectivity filter part_3 motif lies at 523–527 (GLFIP). A chloride-binding site is contributed by Phe-525. Residues 570–584 (GLYAMVGAAACLGGV) constitute an intramembrane region (helical). Positions 585-587 (TRM) form an intramembrane region, note=Loop between two helices. Residues 588 to 599 (TVSLVVIMFELT) constitute an intramembrane region (helical). An intramembrane region (note=Loop between two helices) is located at residues 600–604 (GGLEY). A helical transmembrane segment spans residues 605-622 (IVPLMAAAMTSKWVADAL). The Cytoplasmic portion of the chain corresponds to 623-816 (GREGIYDAHI…NQDPDSILFN (194 aa)). Tyr-628 serves as a coordination point for chloride. 2 consecutive CBS domains span residues 656–720 (MKPR…ARKK) and 752–812 (ILDL…DPDS). ATP-binding positions include Thr-666, 687–689 (YSG), and 794–797 (TKKD).

Belongs to the chloride channel (TC 2.A.49) family. ClC-5/CLCN5 subfamily. In terms of assembly, interacts with NEDD4 and NEDD4L. In terms of processing, ubiquitinated by NEDD4L in the presence of albumin; which promotes endocytosis and proteasomal degradation.

The protein resides in the golgi apparatus membrane. The protein localises to the endosome membrane. Its subcellular location is the cell membrane. The catalysed reaction is 2 chloride(in) + H(+)(out) = 2 chloride(out) + H(+)(in). Proton-coupled chloride transporter. Functions as antiport system and exchanges chloride ions against protons. Important for normal acidification of the endosome lumen. May play an important role in renal tubular function. The CLC channel family contains both chloride channels and proton-coupled anion transporters that exchange chloride or another anion for protons. The absence of conserved gating glutamate residues is typical for family members that function as channels. This is H(+)/Cl(-) exchange transporter 5 (CLCN5) from Sus scrofa (Pig).